A 142-amino-acid polypeptide reads, in one-letter code: Nucleoside diphosphate kinase (142 aa).

ATP is bound by residues Lys-11, Phe-59, Arg-87, Thr-93, Arg-104, and Asn-114. His-117 serves as the catalytic Pros-phosphohistidine intermediate.

This sequence belongs to the NDK family. Mg(2+) is required as a cofactor.

It is found in the cytoplasm. The catalysed reaction is a 2'-deoxyribonucleoside 5'-diphosphate + ATP = a 2'-deoxyribonucleoside 5'-triphosphate + ADP. It carries out the reaction a ribonucleoside 5'-diphosphate + ATP = a ribonucleoside 5'-triphosphate + ADP. Functionally, major role in the synthesis of nucleoside triphosphates other than ATP. The ATP gamma phosphate is transferred to the NDP beta phosphate via a ping-pong mechanism, using a phosphorylated active-site intermediate. The sequence is that of Nucleoside diphosphate kinase from Hyperthermus butylicus (strain DSM 5456 / JCM 9403 / PLM1-5).